A 254-amino-acid polypeptide reads, in one-letter code: TLC domain-containing protein At5g14285 (254 aa).

6 helical membrane-spanning segments follow: residues 12 to 32 (DLPIFFSMFLTIYLIAYFIVF), 45 to 65 (SCLISIFHGSPAVFLATRAVF), 82 to 101 (TVLDFSVAYFLTDLFHYIVF), 124 to 144 (FLVFHGACAILGLLILAEVTS), 172 to 192 (LSPPFYAFYSIVRGVLGPLFF), and 211 to 231 (WLWISWAIVVGIAITVSILWI). In terms of domain architecture, TLC spans 38–248 (QIRPEASSCL…FSERKANKIR (211 aa)).

The protein resides in the membrane. This Arabidopsis thaliana (Mouse-ear cress) protein is TLC domain-containing protein At5g14285.